Consider the following 239-residue polypeptide: Ribose-5-phosphate isomerase A (239 aa).

Residues 40–43, 96–99, and 110–113 each bind substrate; these read SGST, DGAD, and KGGG. The active-site Proton acceptor is E119. K137 contacts substrate.

Belongs to the ribose 5-phosphate isomerase family. Homodimer.

It carries out the reaction aldehydo-D-ribose 5-phosphate = D-ribulose 5-phosphate. It functions in the pathway carbohydrate degradation; pentose phosphate pathway; D-ribose 5-phosphate from D-ribulose 5-phosphate (non-oxidative stage): step 1/1. Functionally, catalyzes the reversible conversion of ribose-5-phosphate to ribulose 5-phosphate. The sequence is that of Ribose-5-phosphate isomerase A from Methanococcus vannielii (strain ATCC 35089 / DSM 1224 / JCM 13029 / OCM 148 / SB).